The chain runs to 2453 residues: Tyrosine-protein phosphatase non-receptor type 13 (2453 aa).

A KIND domain is found at 3 to 190; that stretch reads VSLAEALEVR…SGTDPLSRSS (188 aa). The disordered stretch occupies residues 183–227; that stretch reads TDPLSRSSEQKPDRSQAIRDRLRGKGLPTGRSSTSDALDTHEAPL. Basic and acidic residues predominate over residues 190-205; the sequence is SEQKPDRSQAIRDRLR. S240 is subject to Phosphoserine. The interval 253-285 is disordered; that stretch reads EDYLKDTPSDNNSRHEDSETFSSPYQFKTSTPQ. Residues 256–270 show a composition bias toward basic and acidic residues; the sequence is LKDTPSDNNSRHEDS. Positions 272–285 are enriched in polar residues; sequence TFSSPYQFKTSTPQ. 2 positions are modified to phosphoserine: S297 and S298. The interval 429–457 is disordered; sequence SEASKRFESSSGLPGVDETGQTRPSRQYE. A compositionally biased stretch (polar residues) spans 447 to 457; sequence TGQTRPSRQYE. Positions 458 to 493 form a coiled coil; the sequence is TSLEGNLINQDIMLRRQEEEMMQLQARMALRQSRLS. Residues 565–865 form the FERM domain; that stretch reads RKVNIRLLSG…SQHKFQLQMR (301 aa). Phosphoserine is present on residues S883, S890, S901, S904, and S907. Over residues 944–957 the composition is skewed to basic and acidic residues; the sequence is KEKTDKASWEEKPR. 2 disordered regions span residues 944–966 and 1007–1063; these read KEKT…YHDL and LAGL…VPFK. Phosphoserine occurs at positions 1021 and 1025. Residues 1025–1034 show a composition bias toward basic and acidic residues; that stretch reads SPERRNHESD. Low complexity predominate over residues 1049–1058; that stretch reads SLPSSGKSSS. Residue S1076 is modified to Phosphoserine. One can recognise a PDZ 1 domain in the interval 1084-1170; the sequence is LVNLKKDPKH…DVTLVISQPK (87 aa). Disordered regions lie at residues 1199–1356 and 1441–1478; these read DSAM…GDTF and GQVP…TPHV. Phosphoserine is present on S1221. Polar residues-rich tracts occupy residues 1242–1252 and 1267–1279; these read ESASLSQSQVN and PQHS…VTTK. S1270 carries the phosphoserine modification. The span at 1297 to 1315 shows a compositional bias: basic and acidic residues; that stretch reads GISDLIEHLDCADSDKDDS. Residues 1331–1341 are compositionally biased toward low complexity; it reads SSSLSTSNKTS. The region spanning 1357–1442 is the PDZ 2 domain; that stretch reads EVELAKTDGS…VVHLLLEKGQ (86 aa). Basic and acidic residues predominate over residues 1467–1478; sequence APEKVAKQTPHV. Positions 1491-1579 constitute a PDZ 3 domain; the sequence is EVKLFKNSSG…EVSLLLCRPA (89 aa). Positions 1602–1629 are enriched in polar residues; sequence LNSSKETSQPSSSVEQGASSDDNGVSGK. Disordered stretches follow at residues 1602–1662 and 1695–1726; these read LNSS…AKMP and KLES…SDAT. The segment covering 1638–1655 has biased composition (basic and acidic residues); sequence SRRESYSDHSESGEDDSV. PDZ domains lie at 1764–1845 and 1857–1942; these read LITL…GRIL and LPDI…TRDG. Disordered regions lie at residues 1991–2024 and 2051–2139; these read EAVC…DDIY and RHAT…DPPF. A compositionally biased stretch (basic and acidic residues) spans 2012 to 2021; sequence ETKESNSRDD. The Tyrosine-protein phosphatase domain occupies 2180 to 2434; that stretch reads PSKELENLQE…VFCYQVILYV (255 aa). Residues D2345, 2375–2381, and Q2419 each bind substrate; that span reads CSAGIGR. The active-site Phosphocysteine intermediate is the C2375.

The protein belongs to the protein-tyrosine phosphatase family. Non-receptor class subfamily. In terms of assembly, interacts (via the first PDZ domain) with PLEKHA1 and PLEKHA2. Interacts (via the second PDZ domain) with TNFRSF6 (Fas receptor) (via C-terminus). Interacts (via the second PDZ domain) with TRIP6 (via the third LIM domain and C-terminus). Interacts (via the third PDZ domain) with NGFR (via C-terminal SVP motif) and PKN2 (via C-terminus). Interacts (via the second or fourth PDZ domains) with PDLIM4 (via C-terminus only or via combined C-terminus and LIM domain, but not LIM domain only). Found in a complex with PDLIM4 and TRIP6. Interacts with PDLIM4; this interaction results in dephosphorylation of SRC 'Tyr-419' by this protein leading to its inactivation. Interacts with BRD7. Interacts with RAPGEF6. Interacts with ARHGAP29. Interacts with PIK3R2; dephosphorylates PIK3R2. Interacts with FBXL2. Interacts (via the FERM domain) with ENTR1. Found in a complex with ENTR1, PTPN13 and GIT1. As to expression, expressed predominantly in kidney and, to a lesser extent, in lung, heart, brain and testis.

It is found in the cytoplasm. It localises to the cytoskeleton. The protein resides in the nucleus. Its subcellular location is the cell projection. The protein localises to the lamellipodium. It catalyses the reaction O-phospho-L-tyrosyl-[protein] + H2O = L-tyrosyl-[protein] + phosphate. Functionally, tyrosine phosphatase which negatively regulates FAS-induced apoptosis and NGFR-mediated pro-apoptotic signaling. May regulate phosphoinositide 3-kinase (PI3K) signaling through dephosphorylation of PIK3R2. The sequence is that of Tyrosine-protein phosphatase non-receptor type 13 (Ptpn13) from Mus musculus (Mouse).